The sequence spans 526 residues: Probable 1,4-alpha-glucan branching enzyme MT3115 (526 aa).

Residue glutamate 205 is the Nucleophile of the active site. Positions 251 and 268 each coordinate substrate. Residue aspartate 344 is the Proton donor of the active site. Substrate-binding residues include tryptophan 396 and aspartate 462.

Belongs to the glycosyl hydrolase 57 family.

It catalyses the reaction Transfers a segment of a (1-&gt;4)-alpha-D-glucan chain to a primary hydroxy group in a similar glucan chain.. Functionally, catalyzes the formation of branch points in alpha-glucans by cleavage of an alpha-1,4 glycosidic bond and subsequent transfer of the cleaved-off oligosaccharide to a new alpha-1,6 position. Is probably involved in the biosynthesis of 6-O-methylglucosyl lipopolysaccharides (MGLP). This chain is Probable 1,4-alpha-glucan branching enzyme MT3115, found in Mycobacterium tuberculosis (strain CDC 1551 / Oshkosh).